The primary structure comprises 324 residues: Beta-ketoacyl-[acyl-carrier-protein] synthase III (324 aa).

Residues Cys112 and His251 contribute to the active site. An ACP-binding region spans residues 252-256 (QANLR). The active site involves Asn281.

The protein belongs to the thiolase-like superfamily. FabH family. In terms of assembly, homodimer.

The protein resides in the cytoplasm. It catalyses the reaction malonyl-[ACP] + acetyl-CoA + H(+) = 3-oxobutanoyl-[ACP] + CO2 + CoA. The protein operates within lipid metabolism; fatty acid biosynthesis. Functionally, catalyzes the condensation reaction of fatty acid synthesis by the addition to an acyl acceptor of two carbons from malonyl-ACP. Catalyzes the first condensation reaction which initiates fatty acid synthesis and may therefore play a role in governing the total rate of fatty acid production. Possesses both acetoacetyl-ACP synthase and acetyl transacylase activities. Its substrate specificity determines the biosynthesis of branched-chain and/or straight-chain of fatty acids. In Clostridium perfringens (strain ATCC 13124 / DSM 756 / JCM 1290 / NCIMB 6125 / NCTC 8237 / Type A), this protein is Beta-ketoacyl-[acyl-carrier-protein] synthase III.